A 132-amino-acid polypeptide reads, in one-letter code: Large ribosomal subunit protein bL17 (132 aa).

Belongs to the bacterial ribosomal protein bL17 family. In terms of assembly, part of the 50S ribosomal subunit. Contacts protein L32.

This chain is Large ribosomal subunit protein bL17, found in Marinobacter nauticus (strain ATCC 700491 / DSM 11845 / VT8) (Marinobacter aquaeolei).